The sequence spans 181 residues: Cytochrome c-type biogenesis protein CcmE (181 aa).

The Cytoplasmic portion of the chain corresponds to 1-8 (MNPRRKSR). Residues 9 to 29 (LKVVVSIIFGVAVAAGLTLYA) form a helical; Signal-anchor for type II membrane protein membrane-spanning segment. The Periplasmic portion of the chain corresponds to 30 to 181 (LSQNIDLFYT…TLKTLQGEAN (152 aa)). Residues H131 and Y135 each contribute to the heme site. 2 stretches are compositionally biased toward basic and acidic residues: residues 135–148 (YMPP…KEQH) and 156–166 (ADLKGTSARDK). Residues 135–166 (YMPPELGDKLKEQHGAAGISEADLKGTSARDK) are disordered.

Belongs to the CcmE/CycJ family.

The protein resides in the cell inner membrane. Functionally, heme chaperone required for the biogenesis of c-type cytochromes. Transiently binds heme delivered by CcmC and transfers the heme to apo-cytochromes in a process facilitated by CcmF and CcmH. This Actinobacillus pleuropneumoniae serotype 7 (strain AP76) protein is Cytochrome c-type biogenesis protein CcmE.